The primary structure comprises 340 residues: Chorismate mutase 1, chloroplastic (340 aa).

Residues 1–65 (MEASLLMRSS…KPRSGTSSVH (65 aa)) constitute a chloroplast transit peptide. Ala66 carries the post-translational modification N-acetylalanine. Arg79 is a binding site for L-phenylalanine. In terms of domain architecture, Chorismate mutase spans 79–340 (RVDESESLTL…QVEYLLRRLD (262 aa)). Residues Arg150 and 211–214 (NYGS) contribute to the L-tyrosine site. 211–214 (NYGS) is an L-phenylalanine binding site.

In terms of assembly, homodimer. Expressed in roots, shoots, rosette leaves, stems, cauline leaves, flowers and siliques.

Its subcellular location is the plastid. It is found in the chloroplast. The enzyme catalyses chorismate = prephenate. Its pathway is metabolic intermediate biosynthesis; prephenate biosynthesis; prephenate from chorismate: step 1/1. With respect to regulation, allosterically inhibited by tyrosine and phenylalanine. Activated by tryptophan. In terms of biological role, may play a role in chloroplast biogenesis. This Arabidopsis thaliana (Mouse-ear cress) protein is Chorismate mutase 1, chloroplastic.